The primary structure comprises 433 residues: Glutamate-1-semialdehyde 2,1-aminomutase (433 aa).

An N6-(pyridoxal phosphate)lysine modification is found at lysine 273.

Belongs to the class-III pyridoxal-phosphate-dependent aminotransferase family. HemL subfamily. In terms of assembly, homodimer. Requires pyridoxal 5'-phosphate as cofactor.

It is found in the cytoplasm. The catalysed reaction is (S)-4-amino-5-oxopentanoate = 5-aminolevulinate. It functions in the pathway porphyrin-containing compound metabolism; protoporphyrin-IX biosynthesis; 5-aminolevulinate from L-glutamyl-tRNA(Glu): step 2/2. The protein operates within porphyrin-containing compound metabolism; chlorophyll biosynthesis. The polypeptide is Glutamate-1-semialdehyde 2,1-aminomutase (Gloeothece citriformis (strain PCC 7424) (Cyanothece sp. (strain PCC 7424))).